We begin with the raw amino-acid sequence, 216 residues long: Octanoyltransferase (216 aa).

Residues 33 to 216 (AATADELWIV…ANRLSTSLSR (184 aa)) enclose the BPL/LPL catalytic domain. Substrate contacts are provided by residues 72 to 79 (RGGEVTYH), 148 to 150 (ALG), and 162 to 164 (GVS). Residue Cys-180 is the Acyl-thioester intermediate of the active site.

Belongs to the LipB family.

Its subcellular location is the cytoplasm. It carries out the reaction octanoyl-[ACP] + L-lysyl-[protein] = N(6)-octanoyl-L-lysyl-[protein] + holo-[ACP] + H(+). It functions in the pathway protein modification; protein lipoylation via endogenous pathway; protein N(6)-(lipoyl)lysine from octanoyl-[acyl-carrier-protein]: step 1/2. Functionally, catalyzes the transfer of endogenously produced octanoic acid from octanoyl-acyl-carrier-protein onto the lipoyl domains of lipoate-dependent enzymes. Lipoyl-ACP can also act as a substrate although octanoyl-ACP is likely to be the physiological substrate. This is Octanoyltransferase from Janthinobacterium sp. (strain Marseille) (Minibacterium massiliensis).